A 291-amino-acid polypeptide reads, in one-letter code: Putative heme-binding peroxidase (291 aa).

The active-site Proton acceptor is the histidine 61. Histidine 185 provides a ligand contact to heme b. Tryptophan 201 (tryptophan radical intermediate) is an active-site residue.

This sequence belongs to the peroxidase family. Cytochrome c peroxidase subfamily. Heme b serves as cofactor.

Functionally, destroys radicals which are normally produced within the cells and which are toxic to biological systems. This chain is Putative heme-binding peroxidase (CCP2), found in Candida albicans (strain SC5314 / ATCC MYA-2876) (Yeast).